Consider the following 149-residue polypeptide: Transcriptional repressor NrdR (149 aa).

A zinc finger lies at 3–34; the sequence is CPFCTAVDTKVIDSRLVGDGSQVRRRRQCLVC. An ATP-cone domain is found at 49 to 139; that stretch reads PRVVKSDEIR…VYRSFEDVRD (91 aa).

Belongs to the NrdR family. The cofactor is Zn(2+).

In terms of biological role, negatively regulates transcription of bacterial ribonucleotide reductase nrd genes and operons by binding to NrdR-boxes. This Proteus mirabilis (strain HI4320) protein is Transcriptional repressor NrdR.